We begin with the raw amino-acid sequence, 294 residues long: MARYVGRFAPSPSGPLHFGSLIAALGSYFQAKANNGIWLVRIEDLDPPREMPGASQLILEALKAYQLHWDGEVVYQSERHGLYQAQIDAWLDNGDAYYCQCTRKQIKEHGGFYPGTCRDKNLKEGAIRLKMTKPVARFLDQKHGMIEIPEQLVNEDFIIKRRDGLFAYNLAVVLDDIDQGVTEVVRGADLIEPTGRQISLYQILGQPEVSYLHLPLAMDDNGNKLSKQNHATAIDIENPKPALLHAMTFLGFDVPEEIKAASMNEILSWGCENWRLEQLPSEIEITPRFSNGTV.

L-glutamate is bound by residues 7-11 and Glu43; that span reads RFAPS. Residues 10–20 carry the 'HIGH' region motif; the sequence is PSPSGPLHFGS. Positions 99, 101, 113, and 117 each coordinate Zn(2+). L-glutamate is bound by residues Tyr168 and Arg186. Residues 224–228 carry the 'KMSKS' region motif; it reads KLSKQ. Lys227 lines the ATP pocket.

Belongs to the class-I aminoacyl-tRNA synthetase family. GluQ subfamily. Zn(2+) is required as a cofactor.

In terms of biological role, catalyzes the tRNA-independent activation of glutamate in presence of ATP and the subsequent transfer of glutamate onto a tRNA(Asp). Glutamate is transferred on the 2-amino-5-(4,5-dihydroxy-2-cyclopenten-1-yl) moiety of the queuosine in the wobble position of the QUC anticodon. This is Glutamyl-Q tRNA(Asp) synthetase from Vibrio parahaemolyticus serotype O3:K6 (strain RIMD 2210633).